The primary structure comprises 394 residues: Ceramide glucosyltransferase (394 aa).

Topologically, residues 1–10 (MALLDLAQEG) are lumenal. A helical membrane pass occupies residues 11–32 (MALFGFVLFVVLWLMHFMSIIY). The Cytoplasmic portion of the chain corresponds to 33–195 (TRLHLNKKAT…QVYFGTSHPR (163 aa)). Residue D92 is a short sequence motif, D1. The residue at position 117 (K117) is an N6-acetyllysine. A short sequence motif (D2) is located at residue D144. Residues 196–215 (SYISANVTGFKCVTGMSCLM) form a helical membrane-spanning segment. The Lumenal portion of the chain corresponds to 216–287 (RKDVLDQAGG…KLRINMLPAT (72 aa)). A short sequence motif (D3) is located at residue D236. D236 (proton acceptor) is an active-site residue. Positions 272-276 (RMIRW) match the (Q/R)XXRW motif. The helical transmembrane segment at 288 to 304 (IICEPISECFVASLIIG) threads the bilayer. Residues 305–309 (WAAHH) lie on the Cytoplasmic side of the membrane. The chain crosses the membrane as a helical span at residues 310–328 (VFRWDIMVFFMCHCLAWFI). The Lumenal portion of the chain corresponds to 329-348 (FDYIQLRGVQGGTLCFSKLD). Residues 349 to 369 (YAVAWFIRESMTIYIFLSALW) form a helical membrane-spanning segment. Topologically, residues 370–394 (DPTISWRTGRYRLRCGGTAEEILDV) are cytoplasmic.

The protein belongs to the glycosyltransferase 2 family. As to quaternary structure, interacts with RTN1; regulates the ceramide glucosyltransferase activity of UGCG.

It localises to the golgi apparatus membrane. The catalysed reaction is an N-acylsphing-4-enine + UDP-alpha-D-glucose = a beta-D-glucosyl-(1&lt;-&gt;1')-N-acylsphing-4-enine + UDP + H(+). It catalyses the reaction UDP-alpha-D-xylose + an N-acylsphing-4-enine = a beta-D-xylosyl-(1&lt;-&gt;1')-N-acylsphing-4-enine + UDP + H(+). It carries out the reaction N-(9Z-octadecenoyl)-sphing-4-enine + UDP-alpha-D-xylose = beta-D-xylosyl-(1&lt;-&gt;1')-N-(9Z-octadecenoyl)-sphing-4-enine + UDP + H(+). The protein operates within lipid metabolism; sphingolipid metabolism. Its function is as follows. Participates in the initial step of the glucosylceramide-based glycosphingolipid/GSL synthetic pathway at the cytosolic surface of the Golgi. Catalyzes the transfer of glucose from UDP-glucose to ceramide to produce glucosylceramide/GlcCer (such as beta-D-glucosyl-(1&lt;-&gt;1')-N-acylsphing-4-enine). Glucosylceramide is the core component of glycosphingolipids/GSLs, amphipathic molecules consisting of a ceramide lipid moiety embedded in the outer leaflet of the membrane, linked to one of hundreds of different externally oriented oligosaccharide structures. Glycosphingolipids are essential components of membrane microdomains that mediate membrane trafficking and signal transduction. They are implicated in many fundamental cellular processes, including growth, differentiation, migration, morphogenesis, cell-to-cell and cell-to-matrix interactions. They are required for instance in the proper development and functioning of the nervous system. As an example of their role in signal transduction, they regulate the leptin receptor/LEPR in the leptin-mediated signaling pathway. They also play an important role in the establishment of the skin barrier regulating keratinocyte differentiation and the proper assembly of the cornified envelope. The biosynthesis of GSLs is also required for the proper intestinal endocytic uptake of nutritional lipids. Catalyzes the synthesis of xylosylceramide/XylCer (such as beta-D-xylosyl-(1&lt;-&gt;1')-N-acylsphing-4-enine) using UDP-Xyl as xylose donor. The polypeptide is Ceramide glucosyltransferase (Mus musculus (Mouse)).